The primary structure comprises 88 residues: Defensin-like protein 267 (88 aa).

The signal sequence occupies residues Met-1–Ala-23. Intrachain disulfides connect Cys-45–Cys-63, Cys-51–Cys-68, and Cys-55–Cys-70.

It belongs to the DEFL family.

The protein localises to the secreted. This chain is Defensin-like protein 267, found in Arabidopsis thaliana (Mouse-ear cress).